The primary structure comprises 342 residues: N-acetyl-gamma-glutamyl-phosphate reductase (342 aa).

Residue cysteine 149 is part of the active site.

It belongs to the NAGSA dehydrogenase family. Type 1 subfamily.

It is found in the cytoplasm. The enzyme catalyses N-acetyl-L-glutamate 5-semialdehyde + phosphate + NADP(+) = N-acetyl-L-glutamyl 5-phosphate + NADPH + H(+). It participates in amino-acid biosynthesis; L-arginine biosynthesis; N(2)-acetyl-L-ornithine from L-glutamate: step 3/4. Catalyzes the NADPH-dependent reduction of N-acetyl-5-glutamyl phosphate to yield N-acetyl-L-glutamate 5-semialdehyde. The polypeptide is N-acetyl-gamma-glutamyl-phosphate reductase (Cereibacter sphaeroides (strain ATCC 17025 / ATH 2.4.3) (Rhodobacter sphaeroides)).